Consider the following 292-residue polypeptide: Acetylglutamate kinase (292 aa).

Residues 64-65 (GG), arginine 86, and asparagine 190 contribute to the substrate site.

Belongs to the acetylglutamate kinase family. ArgB subfamily.

The protein localises to the cytoplasm. The enzyme catalyses N-acetyl-L-glutamate + ATP = N-acetyl-L-glutamyl 5-phosphate + ADP. Its pathway is amino-acid biosynthesis; L-arginine biosynthesis; N(2)-acetyl-L-ornithine from L-glutamate: step 2/4. Catalyzes the ATP-dependent phosphorylation of N-acetyl-L-glutamate. The protein is Acetylglutamate kinase of Trichlorobacter lovleyi (strain ATCC BAA-1151 / DSM 17278 / SZ) (Geobacter lovleyi).